Consider the following 1938-residue polypeptide: Myosin-1 (1938 aa).

The Myosin N-terminal SH3-like domain occupies 33 to 82; it reads DAKTSVFVADPKESFVKATVQSREGGKVTAKTEAGATVTVKEDQCFPMNP. Thr-64 and Thr-69 each carry phosphothreonine. One can recognise a Myosin motor domain in the interval 86 to 781; that stretch reads DKIEDMAMMT…LLGLLEEMRD (696 aa). Lys-130 is subject to N6,N6,N6-trimethyllysine. Position 179-186 (179-186) interacts with ATP; that stretch reads GESGAGKT. Tyr-389 is modified (phosphotyrosine). Thr-419 carries the phosphothreonine modification. Tyr-424 carries the phosphotyrosine modification. The residue at position 625 (Ser-625) is a Phosphoserine. The segment at 658–680 is actin-binding; the sequence is LNKLMTNLRSTHPHFVRCIIPNE. Pros-methylhistidine is present on His-756. Residues 760 to 774 are actin-binding; it reads KFGHTKVFFKAGLLG. The 30-residue stretch at 784-813 folds into the IQ domain; sequence LAQIITRTQARCRGFLARVEYQRMVERRES. The stretch at 842–1938 forms a coiled coil; that stretch reads LLKSAETEKE…EVHTKIISEE (1097 aa). Phosphoserine is present on residues Ser-1091 and Ser-1095. Disordered regions lie at residues 1124-1146 and 1152-1171; these read EIEA…SREL and RLEE…KKRE. Residues 1127-1146 show a composition bias toward basic and acidic residues; sequence AERASRAKAEKQRSDLSREL. Phosphoserine is present on residues Ser-1161 and Ser-1236. Phosphothreonine is present on Thr-1240. Ser-1242 is modified (phosphoserine). Phosphothreonine is present on Thr-1254. Ser-1260 is subject to Phosphoserine. Thr-1285 is subject to Phosphothreonine. A phosphoserine mark is found at Ser-1291, Ser-1302, and Ser-1305. The residue at position 1463 (Tyr-1463) is a Phosphotyrosine. The residue at position 1466 (Thr-1466) is a Phosphothreonine. Position 1473 is a phosphoserine (Ser-1473). Tyr-1491 carries the phosphotyrosine modification. At Ser-1494 the chain carries Phosphoserine. At Thr-1500 the chain carries Phosphothreonine. Ser-1513 carries the post-translational modification Phosphoserine. Residue Thr-1516 is modified to Phosphothreonine. 5 positions are modified to phosphoserine: Ser-1541, Ser-1553, Ser-1573, Ser-1713, and Ser-1725. Residues Thr-1729 and Thr-1735 each carry the phosphothreonine modification. Phosphoserine is present on Ser-1738.

It belongs to the TRAFAC class myosin-kinesin ATPase superfamily. Myosin family. As to quaternary structure, muscle myosin is a hexameric protein that consists of 2 heavy chain subunits (MHC), 2 alkali light chain subunits (MLC) and 2 regulatory light chain subunits (MLC-2). Interacts with SLC26A5.

It is found in the cytoplasm. The protein localises to the myofibril. Functionally, required for normal hearing. It plays a role in cochlear amplification of auditory stimuli, likely through the positive regulation of prestin (SLC26A5) activity and outer hair cell (OHC) electromotility. The polypeptide is Myosin-1 (MYH1) (Equus caballus (Horse)).